We begin with the raw amino-acid sequence, 431 residues long: Histidine--tRNA ligase (431 aa).

This sequence belongs to the class-II aminoacyl-tRNA synthetase family. As to quaternary structure, homodimer.

Its subcellular location is the cytoplasm. The enzyme catalyses tRNA(His) + L-histidine + ATP = L-histidyl-tRNA(His) + AMP + diphosphate + H(+). The sequence is that of Histidine--tRNA ligase from Limosilactobacillus fermentum (strain NBRC 3956 / LMG 18251) (Lactobacillus fermentum).